The sequence spans 215 residues: Probable cutinase 3 (215 aa).

Positions 1–17 (MHFRALLVSALATLAMA) are cleaved as a signal peptide. 2 cysteine pairs are disulfide-bonded: Cys39–Cys118 and Cys65–Cys79. The active-site Nucleophile is the Ser129. Cys180 and Cys187 are oxidised to a cystine. The active site involves Asp184. The active-site Proton donor/acceptor is the His197.

The protein belongs to the cutinase family.

It is found in the secreted. The catalysed reaction is cutin + H2O = cutin monomers.. Its function is as follows. Catalyzes the hydrolysis of complex carboxylic polyesters found in the cell wall of plants. Degrades cutin, a macromolecule that forms the structure of the plant cuticle. The protein is Probable cutinase 3 of Aspergillus clavatus (strain ATCC 1007 / CBS 513.65 / DSM 816 / NCTC 3887 / NRRL 1 / QM 1276 / 107).